The chain runs to 643 residues: Hepatoma-derived growth factor-related protein 2 (643 aa).

The 58-residue stretch at 7–64 folds into the PWWP domain; the sequence is PGDLVFAKMKGYPHWPARIDDVKDGAVKPPPNKYPIFFYGTHETAFLAPKDLFPYEKC. Disordered stretches follow at residues 88 to 450 and 548 to 643; these read PQAS…KKPE and LESQ…NQTS. The span at 90-104 shows a compositional bias: low complexity; it reads ASYSLPPASVSSSDS. A compositionally biased stretch (basic and acidic residues) spans 107 to 116; that stretch reads PEEKSTARSD. Residues 176–187 are compositionally biased toward acidic residues; that stretch reads SEEENSDSDQDF. Over residues 194–204 the composition is skewed to polar residues; sequence PRIQRRTTNLG. The segment covering 209–231 has biased composition (basic and acidic residues); it reads IFAESDSKSDESEDEKKEEEQKK. Low complexity predominate over residues 232 to 249; the sequence is SPSSSSASSPSLSSSDSE. Composition is skewed to basic and acidic residues over residues 290-353, 373-382, and 417-450; these read SVDR…DSSK, EDKKPVKEVK, and RPSESARKTNQKEKRGERPRGRPSKVEKEKKKPE. Residues 295-345 adopt a coiled-coil conformation; the sequence is SEWKKRDEERRRELEERRKKEQEEQLRRLREEEREEEERKKREKAEKGDKS. Residues 549–559 are compositionally biased toward polar residues; sequence ESQQKTVQKVN. 2 stretches are compositionally biased toward basic and acidic residues: residues 560-575 and 608-622; these read TAEKDPEEEKQTGKVE and NKTEMETKQNNHAEH.

The protein belongs to the HDGF family.

The protein localises to the nucleus. The protein resides in the cytoplasm. In terms of biological role, may act as a regulator of myogenesis. Promotes the repair of DNA double-strand breaks (DSBs) through the homologous recombination pathway by facilitating the recruitment of the DNA endonuclease RBBP8 to the DSBs. The protein is Hepatoma-derived growth factor-related protein 2 (hdgfl2) of Xenopus tropicalis (Western clawed frog).